The following is a 399-amino-acid chain: Elongation factor Tu (399 aa).

The region spanning 10-209 is the tr-type G domain; that stretch reads KPHVNIGTIG…AVDDYIPTPA (200 aa). The interval 19 to 26 is G1; sequence GHVDHGKT. 19 to 26 is a GTP binding site; it reads GHVDHGKT. T26 contributes to the Mg(2+) binding site. The tract at residues 60–64 is G2; that stretch reads GITIA. Residues 81 to 84 are G3; that stretch reads DCPG. GTP-binding positions include 81 to 85 and 136 to 139; these read DCPGH and NKAD. Residues 136 to 139 form a G4 region; that stretch reads NKAD. Positions 174-176 are G5; the sequence is SAL.

Belongs to the TRAFAC class translation factor GTPase superfamily. Classic translation factor GTPase family. EF-Tu/EF-1A subfamily. As to quaternary structure, monomer.

The protein localises to the cytoplasm. The enzyme catalyses GTP + H2O = GDP + phosphate + H(+). Its function is as follows. GTP hydrolase that promotes the GTP-dependent binding of aminoacyl-tRNA to the A-site of ribosomes during protein biosynthesis. This is Elongation factor Tu from Campylobacter lari (strain RM2100 / D67 / ATCC BAA-1060).